The following is a 297-amino-acid chain: 4-diphosphocytidyl-2-C-methyl-D-erythritol kinase (297 aa).

The active site involves Lys14. Position 99–109 (99–109 (PVAAGIGGGSA)) interacts with ATP. Asp141 is an active-site residue.

It belongs to the GHMP kinase family. IspE subfamily.

It catalyses the reaction 4-CDP-2-C-methyl-D-erythritol + ATP = 4-CDP-2-C-methyl-D-erythritol 2-phosphate + ADP + H(+). The protein operates within isoprenoid biosynthesis; isopentenyl diphosphate biosynthesis via DXP pathway; isopentenyl diphosphate from 1-deoxy-D-xylulose 5-phosphate: step 3/6. Functionally, catalyzes the phosphorylation of the position 2 hydroxy group of 4-diphosphocytidyl-2C-methyl-D-erythritol. This is 4-diphosphocytidyl-2-C-methyl-D-erythritol kinase from Bradyrhizobium diazoefficiens (strain JCM 10833 / BCRC 13528 / IAM 13628 / NBRC 14792 / USDA 110).